The chain runs to 622 residues: Prolactin receptor (622 aa).

Positions 1–24 are cleaved as a signal peptide; it reads MKENVASATVFTLLLFLNTCLLNG. At 25-234 the chain is on the extracellular side; that stretch reads QLPPGKPEIF…QIPSDFTMND (210 aa). Fibronectin type-III domains follow at residues 27–128 and 129–229; these read PPGK…VQPD and PPLE…IPSD. The cysteines at positions 36 and 46 are disulfide-linked. Residue asparagine 59 is glycosylated (N-linked (GlcNAc...) asparagine). Cysteine 75 and cysteine 86 are joined by a disulfide. Asparagine 104 carries an N-linked (GlcNAc...) asparagine glycan. Aspartate 211 and histidine 212 together coordinate Zn(2+). Residues 215–219 carry the WSXWS motif motif; it reads WSAWS. N-linked (GlcNAc...) asparagine glycosylation occurs at asparagine 233. A helical transmembrane segment spans residues 235 to 258; that stretch reads TTVWISVAVLSAVICLIIVWAVAL. The Cytoplasmic segment spans residues 259 to 622; that stretch reads KGYSMVTCIF…DPACFTHSFH (364 aa). Positions 267-275 match the Box 1 motif motif; that stretch reads IFPPVPGPK. Disordered regions lie at residues 326-378, 461-505, and 520-545; these read MSVH…YDPE, SSQT…GSAK, and ALSL…NNKE. The span at 466–486 shows a compositional bias: basic and acidic residues; it reads KSREEGKATQQREVESFHSET.

The protein belongs to the type I cytokine receptor family. Type 1 subfamily. As to quaternary structure, homodimer upon hormone binding. Interacts with SMARCA1. Interacts with GH1. Interacts with CSH. Interacts with NEK3 and VAV2 and this interaction is prolactin-dependent. Expressed in breast, placenta, kidney, liver and pancreas.

Its subcellular location is the membrane. The protein localises to the secreted. This is a receptor for the anterior pituitary hormone prolactin (PRL). Acts as a prosurvival factor for spermatozoa by inhibiting sperm capacitation through suppression of SRC kinase activation and stimulation of AKT. Isoform 4 is unable to transduce prolactin signaling. Isoform 6 is unable to transduce prolactin signaling. This chain is Prolactin receptor (PRLR), found in Homo sapiens (Human).